The primary structure comprises 453 residues: tRNA modification GTPase MnmE (453 aa).

3 residues coordinate (6S)-5-formyl-5,6,7,8-tetrahydrofolate: Arg22, Glu79, and Lys119. In terms of domain architecture, TrmE-type G spans 215–376 (GMKVVIAGRP…LKQHLKSLMG (162 aa)). Asn225 lines the K(+) pocket. Residues 225-230 (NAGKSS), 244-250 (TEIAGTT), 269-272 (DTAG), and 334-337 (NKAD) contribute to the GTP site. A Mg(2+)-binding site is contributed by Ser229. The K(+) site is built by Thr244, Ile246, and Thr249. Thr250 contacts Mg(2+). Lys453 serves as a coordination point for (6S)-5-formyl-5,6,7,8-tetrahydrofolate.

It belongs to the TRAFAC class TrmE-Era-EngA-EngB-Septin-like GTPase superfamily. TrmE GTPase family. In terms of assembly, homodimer. Heterotetramer of two MnmE and two MnmG subunits. K(+) serves as cofactor.

The protein resides in the cytoplasm. Its function is as follows. Exhibits a very high intrinsic GTPase hydrolysis rate. Involved in the addition of a carboxymethylaminomethyl (cmnm) group at the wobble position (U34) of certain tRNAs, forming tRNA-cmnm(5)s(2)U34. The protein is tRNA modification GTPase MnmE of Shewanella sp. (strain MR-7).